A 354-amino-acid chain; its full sequence is Uroporphyrinogen decarboxylase (354 aa).

Substrate is bound by residues 27–31, D77, Y154, S209, and H327; that span reads RQAGR.

This sequence belongs to the uroporphyrinogen decarboxylase family. As to quaternary structure, homodimer.

The protein resides in the cytoplasm. The enzyme catalyses uroporphyrinogen III + 4 H(+) = coproporphyrinogen III + 4 CO2. Its pathway is porphyrin-containing compound metabolism; protoporphyrin-IX biosynthesis; coproporphyrinogen-III from 5-aminolevulinate: step 4/4. Functionally, catalyzes the decarboxylation of four acetate groups of uroporphyrinogen-III to yield coproporphyrinogen-III. The sequence is that of Uroporphyrinogen decarboxylase from Shewanella piezotolerans (strain WP3 / JCM 13877).